The sequence spans 125 residues: Large ribosomal subunit protein bL12 (125 aa).

Belongs to the bacterial ribosomal protein bL12 family. Homodimer. Part of the ribosomal stalk of the 50S ribosomal subunit. Forms a multimeric L10(L12)X complex, where L10 forms an elongated spine to which 2 to 4 L12 dimers bind in a sequential fashion. Binds GTP-bound translation factors.

Its function is as follows. Forms part of the ribosomal stalk which helps the ribosome interact with GTP-bound translation factors. Is thus essential for accurate translation. The chain is Large ribosomal subunit protein bL12 from Rhizobium leguminosarum bv. trifolii (strain WSM2304).